A 339-amino-acid chain; its full sequence is MLRVAINGFGRIGRSVLRALYESDKRDKIEVVAVNELSQPEAMAHLFQYDSTHGRFQHKVTHDQEYLYIDLPNGSQDKVRILHQADLSLLPWQSLEVDLILDCTGVYGSKADGEKHINAGAKKVLFSHPGGSDLDNTIIYGVNHDTLLPEHRIVSNGSCTTNCIIPVIKAIDDAFGIDSGTITTIHSSMNDQQVIDAYHSDLRRTRAASQSIIPVDTKLHKGIERIFPKFSNKFEAISVRVPTVNVTAMDLSVTINTNVKVNDINQTIVNASRCTLHNIVDYTEAPLVSIDFNHDPHSAIVDGSQTRVSNGHLVKMLVWCDNEWGFANRMLDTALAMSK.

11-12 (RI) contributes to the NAD(+) binding site. Substrate-binding positions include 158–160 (SCT), arginine 204, 217–218 (TK), and arginine 240. Cysteine 159 serves as the catalytic Nucleophile. Position 322 (asparagine 322) interacts with NAD(+).

The protein belongs to the glyceraldehyde-3-phosphate dehydrogenase family. Epd subfamily. In terms of assembly, homotetramer.

It is found in the cytoplasm. It catalyses the reaction D-erythrose 4-phosphate + NAD(+) + H2O = 4-phospho-D-erythronate + NADH + 2 H(+). It functions in the pathway cofactor biosynthesis; pyridoxine 5'-phosphate biosynthesis; pyridoxine 5'-phosphate from D-erythrose 4-phosphate: step 1/5. Functionally, catalyzes the NAD-dependent conversion of D-erythrose 4-phosphate to 4-phosphoerythronate. The protein is D-erythrose-4-phosphate dehydrogenase of Aliivibrio fischeri (strain MJ11) (Vibrio fischeri).